The chain runs to 498 residues: ATP synthase subunit beta, chloroplastic (498 aa).

Position 172–179 (172–179 (GGAGVGKT)) interacts with ATP.

The protein belongs to the ATPase alpha/beta chains family. In terms of assembly, F-type ATPases have 2 components, CF(1) - the catalytic core - and CF(0) - the membrane proton channel. CF(1) has five subunits: alpha(3), beta(3), gamma(1), delta(1), epsilon(1). CF(0) has four main subunits: a(1), b(1), b'(1) and c(9-12).

The protein localises to the plastid. It is found in the chloroplast thylakoid membrane. The enzyme catalyses ATP + H2O + 4 H(+)(in) = ADP + phosphate + 5 H(+)(out). In terms of biological role, produces ATP from ADP in the presence of a proton gradient across the membrane. The catalytic sites are hosted primarily by the beta subunits. The polypeptide is ATP synthase subunit beta, chloroplastic (Oryza nivara (Indian wild rice)).